Here is a 136-residue protein sequence, read N- to C-terminus: uncharacterized protein (136 aa).

This is an uncharacterized protein from Acheta domesticus (House cricket).